We begin with the raw amino-acid sequence, 367 residues long: Palmitoyltransferase ZDHHC2 (367 aa).

The Cytoplasmic portion of the chain corresponds to 1–16; sequence MAPSGPGSSARRRCRR. Residues 17–37 traverse the membrane as a helical segment; the sequence is VLYWIPVVFITLLLGWSYYAY. Over 38 to 54 the chain is Lumenal; the sequence is AIQLCIVSMENTGEQVV. Residues 55 to 75 form a helical membrane-spanning segment; that stretch reads CLMAYHLLFAMFVWSYWKTIF. The Cytoplasmic portion of the chain corresponds to 76 to 170; that stretch reads TLPMNPSKEF…NNCVGFSNYK (95 aa). The DHHC domain occupies 127–177; the sequence is RYCDRCQLIKPDRCHHCSVCDKCILKMDHHCPWVNNCVGFSNYKFFLLFLA. Cys157 (S-palmitoyl cysteine intermediate) is an active-site residue. A helical transmembrane segment spans residues 171–191; sequence FFLLFLAYSLLYCLFIAATDL. The Lumenal segment spans residues 192–208; sequence QYFIKFWTNGLPDTQAK. The chain crosses the membrane as a helical span at residues 209-229; it reads FHIMFLFFAAAMFSVSLSSLF. Residues 230–367 are Cytoplasmic-facing; sequence GYHCWLVSKN…NPALTMENET (138 aa). The interval 299–367 is mediates localization to plasma membrane and recycling endosomes; that stretch reads NQDPEQASTP…NPALTMENET (69 aa). A disordered region spans residues 330–367; the sequence is ESQSHLLTDSQSWTESSINPGKCKAGMSNPALTMENET. Polar residues predominate over residues 333-348; sequence SHLLTDSQSWTESSIN. The Non-canonical dileucine endocytic signal signature appears at 335–336; the sequence is LL. A Phosphoserine modification is found at Ser341. An NPxY-like endocytic signal motif is present at residues 358 to 361; the sequence is NPAL.

Belongs to the DHHC palmitoyltransferase family. As to quaternary structure, monomer. Homodimer. The monomeric form has a higher catalytic activity. Autopalmitoylated. Ubiquitously expressed. Reduced expression in colorectal cancers with liver metastasis.

It localises to the postsynaptic density. The protein localises to the postsynaptic recycling endosome membrane. The protein resides in the cell membrane. It is found in the endoplasmic reticulum membrane. Its subcellular location is the golgi apparatus membrane. The catalysed reaction is L-cysteinyl-[protein] + hexadecanoyl-CoA = S-hexadecanoyl-L-cysteinyl-[protein] + CoA. The enzyme catalyses L-cysteinyl-[protein] + tetradecanoyl-CoA = S-tetradecanoyl-L-cysteinyl-[protein] + CoA. It carries out the reaction L-cysteinyl-[protein] + octadecanoyl-CoA = S-octadecanoyl-L-cysteinyl-[protein] + CoA. In terms of biological role, palmitoyltransferase that catalyzes the addition of palmitate onto various protein substrates and is involved in a variety of cellular processes. Has no stringent fatty acid selectivity and in addition to palmitate can also transfer onto target proteins myristate from tetradecanoyl-CoA and stearate from octadecanoyl-CoA. In the nervous system, plays a role in long term synaptic potentiation by palmitoylating AKAP5 through which it regulates protein trafficking from the dendritic recycling endosomes to the plasma membrane and controls both structural and functional plasticity at excitatory synapses. In dendrites, mediates the palmitoylation of DLG4 when synaptic activity decreases and induces synaptic clustering of DLG4 and associated AMPA-type glutamate receptors. Also mediates the de novo and turnover palmitoylation of RGS7BP, a shuttle for Gi/o-specific GTPase-activating proteins/GAPs, promoting its localization to the plasma membrane in response to the activation of G protein-coupled receptors. Through the localization of these GTPase-activating proteins/GAPs, it also probably plays a role in G protein-coupled receptors signaling in neurons. Also probably plays a role in cell adhesion by palmitoylating CD9 and CD151 to regulate their expression and function. Palmitoylates the endoplasmic reticulum protein CKAP4 and regulates its localization to the plasma membrane. Could also palmitoylate LCK and regulate its localization to the plasma membrane. Functionally, (Microbial infection) Promotes Chikungunya virus (CHIKV) replication by mediating viral nsp1 palmitoylation. This chain is Palmitoyltransferase ZDHHC2, found in Homo sapiens (Human).